Here is a 269-residue protein sequence, read N- to C-terminus: GTP cyclohydrolase FolE2 (269 aa).

It belongs to the GTP cyclohydrolase IV family.

It carries out the reaction GTP + H2O = 7,8-dihydroneopterin 3'-triphosphate + formate + H(+). It participates in cofactor biosynthesis; 7,8-dihydroneopterin triphosphate biosynthesis; 7,8-dihydroneopterin triphosphate from GTP: step 1/1. Functionally, converts GTP to 7,8-dihydroneopterin triphosphate. This chain is GTP cyclohydrolase FolE2, found in Azoarcus sp. (strain BH72).